The sequence spans 277 residues: Indole-3-glycerol phosphate synthase (277 aa).

The protein belongs to the TrpC family.

The catalysed reaction is 1-(2-carboxyphenylamino)-1-deoxy-D-ribulose 5-phosphate + H(+) = (1S,2R)-1-C-(indol-3-yl)glycerol 3-phosphate + CO2 + H2O. It participates in amino-acid biosynthesis; L-tryptophan biosynthesis; L-tryptophan from chorismate: step 4/5. The polypeptide is Indole-3-glycerol phosphate synthase (Pseudomonas putida (strain ATCC 700007 / DSM 6899 / JCM 31910 / BCRC 17059 / LMG 24140 / F1)).